The sequence spans 290 residues: Arylamine N-acetyltransferase 1 (290 aa).

Methionine 1 carries the N-acetylmethionine modification. The active-site Acyl-thioester intermediate is the cysteine 68. Positions 103 and 104 each coordinate CoA. 106–107 (IH) serves as a coordination point for substrate. Active-site residues include histidine 107 and aspartate 122. Residues tyrosine 208 and serine 214 each coordinate CoA.

It belongs to the arylamine N-acetyltransferase family.

It localises to the cytoplasm. It catalyses the reaction an arylamine + acetyl-CoA = an N-acetylarylamine + CoA. Functionally, participates in the detoxification of a plethora of hydrazine and arylamine drugs. Catalyzes the N- or O-acetylation of various arylamine and heterocyclic amine substrates and is able to bioactivate several known carcinogens. This chain is Arylamine N-acetyltransferase 1 (NAT1), found in Homo sapiens (Human).